We begin with the raw amino-acid sequence, 728 residues long: MSNEAKCPFHQAAGNGTSNRDWWPNQLDLSILHRHSSLSDPMGKDFNYAQAFEKLDLAAVKRDLHALMTTSQDWWPADFGHYGGLFIRMAWHSAGTYRTADGRGGAGEGQQRFAPLNSWPDNANLDKARRLLWPIKQKYGRAISWADLLILTGNVALESMGFKTFGFAGGRADTWEPEDVYWGSEKIWLELSGGPNSRYSGDRQLENPLAAVQMGLIYVNPEGPDGNPDPVAAARDIRDTFARMAMNDEETVALIAGGHTFGKTHGAGPASNVGAEPEAAGIEAQGLGWKSAYRTGKGADAITSGLEVTWTTTPTQWSHNFFENLFGYEWELTKSPAGAHQWVAKGADAVIPDAFDPSKKHRPTMLTTDLSLRFDPAYEKISRRFHENPEQFADAFARAWFKLTHRDMGPRARYLGPEVPAEVLLWQDPIPAVDHPLIDAADAAELKAKVLASGLTVSQLVSTAWAAASTFRGSDKRGGANGARIRLAPQKDWEANQPEQLAAVLETLEAIRTAFNGAQRGGKQVSLADLIVLAGCAGVEQAAKNAGHAVTVPFAPGRADASQEQTDVESMAVLEPVADGFRNYLKGKYRVPAEVLLVDKAQLLTLSAPEMTVLLGGLRVLGANVGQSRHGVFTAREQALTNDFFVNLLDMGTEWKPTAADADVFEGRDRATGELKWTGTRVDLVFGSHSQLRALAEVYGSADAQEKFVRDFVAVWNKVMNLDRFDLA.

A cross-link (tryptophyl-tyrosyl-methioninium (Trp-Tyr) (with M-244)) is located at residues 91–218 (WHSAGTYRTA…LAAVQMGLIY (128 aa)). The active-site Proton acceptor is the His-92. Residues 218-244 (YVNPEGPDGNPDPVAAARDIRDTFARM) constitute a cross-link (tryptophyl-tyrosyl-methioninium (Tyr-Met) (with W-91)). A heme b-binding site is contributed by His-259.

It belongs to the peroxidase family. Peroxidase/catalase subfamily. Homodimer or homotetramer. The cofactor is heme b. Post-translationally, formation of the three residue Trp-Tyr-Met cross-link is important for the catalase, but not the peroxidase activity of the enzyme.

It catalyses the reaction H2O2 + AH2 = A + 2 H2O. The catalysed reaction is 2 H2O2 = O2 + 2 H2O. In terms of biological role, bifunctional enzyme with both catalase and broad-spectrum peroxidase activity. In Burkholderia pseudomallei (strain 1710b), this protein is Catalase-peroxidase.